A 250-amino-acid chain; its full sequence is Protein lin-28 homolog B (250 aa).

Disordered stretches follow at residues 1–27 (MAEAGASKGGEEPGRLPEHEEEEESPL) and 98–126 (RVTGPGGSPCLGSERRPKGKTVQKRKPKG). The segment covering 9 to 18 (GGEEPGRLPE) has biased composition (basic and acidic residues). The region spanning 29 to 102 (HGAGHCKWFN…GLESIRVTGP (74 aa)) is the CSD domain. Residues 114–125 (PKGKTVQKRKPK) show a composition bias toward basic residues. 2 consecutive CCHC-type zinc fingers follow at residues 127 to 144 (DRCYNCGGLDHHAKECSL) and 149 to 166 (KKCHYCQSIMHMVANCPH). Residues C129, C132, H137, C142, C151, C154, H159, and C164 each contribute to the Zn(2+) site. The segment at 165–250 (PHKTVSQQPT…GPSVQKRKKT (86 aa)) is disordered. Residues 168–177 (TVSQQPTSSQ) are compositionally biased toward polar residues. Low complexity predominate over residues 200 to 209 (GYSSPSYSQE). Residues 210 to 219 (GRSEISERSG) are compositionally biased toward basic and acidic residues.

The protein belongs to the lin-28 family.

Its subcellular location is the nucleus. The protein resides in the nucleolus. Suppressor of specific microRNA (miRNA) biogenesis. Binds target primary miRNA transcripts and sequester them in the nucleolus, away from the microprocessor complex, hence preventing their processing into mature miRNA. The specific interaction with target pri-miRNAs occurs via an 5'-GGAG-3' motif in the pre-miRNA terminal loop. The protein is Protein lin-28 homolog B (LIN28B) of Gallus gallus (Chicken).